Here is a 662-residue protein sequence, read N- to C-terminus: UvrABC system protein B (662 aa).

Positions 31–188 (DNIEGGEKAQ…NDLVDIQFER (158 aa)) constitute a Helicase ATP-binding domain. 44–51 (GATGTGKT) is an ATP binding site. The Beta-hairpin signature appears at 97–120 (YYDYYQPEAYVPSSDTYIEKDSSV). The region spanning 435–601 (QIDDLLGEIN…TIKKEIRDLI (167 aa)) is the Helicase C-terminal domain. Residues 626–661 (KELVKKLEKQMQEAVEVLDFELAAQIRDMMLEVKAL) enclose the UVR domain.

This sequence belongs to the UvrB family. Forms a heterotetramer with UvrA during the search for lesions. Interacts with UvrC in an incision complex.

The protein resides in the cytoplasm. Its function is as follows. The UvrABC repair system catalyzes the recognition and processing of DNA lesions. A damage recognition complex composed of 2 UvrA and 2 UvrB subunits scans DNA for abnormalities. Upon binding of the UvrA(2)B(2) complex to a putative damaged site, the DNA wraps around one UvrB monomer. DNA wrap is dependent on ATP binding by UvrB and probably causes local melting of the DNA helix, facilitating insertion of UvrB beta-hairpin between the DNA strands. Then UvrB probes one DNA strand for the presence of a lesion. If a lesion is found the UvrA subunits dissociate and the UvrB-DNA preincision complex is formed. This complex is subsequently bound by UvrC and the second UvrB is released. If no lesion is found, the DNA wraps around the other UvrB subunit that will check the other stand for damage. This is UvrABC system protein B from Streptococcus pneumoniae serotype 2 (strain D39 / NCTC 7466).